The primary structure comprises 89 residues: uncharacterized protein (89 aa).

A signal peptide spans 1–19 (MIVRTLLIAAALLGGTAQA).

The protein localises to the secreted. This is an uncharacterized protein from Pseudomonas aeruginosa (strain UCBPP-PA14).